Reading from the N-terminus, the 195-residue chain is ATP-dependent Clp protease proteolytic subunit (195 aa).

The active-site Nucleophile is the S101. Residue H126 is part of the active site.

Belongs to the peptidase S14 family.

The protein resides in the plastid. The protein localises to the chloroplast stroma. The enzyme catalyses Hydrolysis of proteins to small peptides in the presence of ATP and magnesium. alpha-casein is the usual test substrate. In the absence of ATP, only oligopeptides shorter than five residues are hydrolyzed (such as succinyl-Leu-Tyr-|-NHMec, and Leu-Tyr-Leu-|-Tyr-Trp, in which cleavage of the -Tyr-|-Leu- and -Tyr-|-Trp bonds also occurs).. Its function is as follows. Cleaves peptides in various proteins in a process that requires ATP hydrolysis. Has a chymotrypsin-like activity. Plays a major role in the degradation of misfolded proteins. This is ATP-dependent Clp protease proteolytic subunit from Bigelowiella natans (Pedinomonas minutissima).